Reading from the N-terminus, the 196-residue chain is MKRAWQRMLSGRRLDLLDPTPMDIEIEDIAHGLAFVARWNGQTTGDYAYSVAEHSLLVEELFARANPGIGERWRLAALLHDAPEYVLGDMITPVKAAIGKGYVELDDRLTAAVHLRFGLPAVLPAPIKRAIKAADTVSARLEAEQIAGFSEAEADRIFGKPDPVLVRGLAIRLRPPPEVRAAFTARHHVLLRSLSG.

Positions 51-164 (VAEHSLLVEE…DRIFGKPDPV (114 aa)) constitute an HD domain.

This is an uncharacterized protein from Rhodobacter capsulatus (strain ATCC BAA-309 / NBRC 16581 / SB1003).